The primary structure comprises 224 residues: MQILLVEDDNTLFQELKKELEQWDFNVAGIEDFGKVMDTFESFNPEIVILDVQLPKYDGFYWCRKMREVSNVPILFLSSRDNPMDQVMSMELGADDYMQKPFYTNVLIAKLQAIYRRVYEFTAEEKRTLTWQDAVVDLSKDSIQKGDDTIFLSKTEMIILEILITKKNQIVSRDTIITALWDDEAFVSDNTLTVNVSRLRKKLSEISMDSAIETKVGKGYMAHE.

One can recognise a Response regulatory domain in the interval 2-115; it reads QILLVEDDNT…VLIAKLQAIY (114 aa). Asp51 carries the 4-aspartylphosphate modification. The ompR/PhoB-type DNA-binding region spans 126 to 224; it reads KRTLTWQDAV…KVGKGYMAHE (99 aa). Residues Thr128, Thr130, and Thr149 each carry the phosphothreonine modification.

In terms of assembly, interacts with GraX. Post-translationally, phosphorylated by GraS. Phosphorylated by Stk1; phosphorylation increases the DNA-binding activity of GraR.

The protein resides in the cytoplasm. Member of the two-component regulatory system GraR/GraS involved in resistance against cationic antimicrobial peptides (CAMPs). Upon phosphorylation by GraS, functions as a transcription regulator by direct binding to promoter regions of target genes such as adhesins, exoproteins, transporters, toxins, and proteins involved in cell wall synthesis. Down-regulates the expression of many genes involved in RNA and amino acid synthesis or glycolysis. The polypeptide is Response regulator protein GraR (graR) (Staphylococcus aureus (strain Mu50 / ATCC 700699)).